The primary structure comprises 318 residues: Porphobilinogen deaminase (318 aa).

S-(dipyrrolylmethanemethyl)cysteine is present on Cys241.

This sequence belongs to the HMBS family. In terms of assembly, monomer. Dipyrromethane serves as cofactor.

The catalysed reaction is 4 porphobilinogen + H2O = hydroxymethylbilane + 4 NH4(+). It functions in the pathway porphyrin-containing compound metabolism; protoporphyrin-IX biosynthesis; coproporphyrinogen-III from 5-aminolevulinate: step 2/4. Tetrapolymerization of the monopyrrole PBG into the hydroxymethylbilane pre-uroporphyrinogen in several discrete steps. This Geobacter sulfurreducens (strain ATCC 51573 / DSM 12127 / PCA) protein is Porphobilinogen deaminase.